A 150-amino-acid polypeptide reads, in one-letter code: Viral late gene transcription factor 2 (150 aa).

The protein belongs to the orthopoxvirus VLTF-2/OPG126 family. As to quaternary structure, interacts with itself. Interacts with the late transcription factors VLTF-1/OPG093.

Functionally, acts with RNA polymerase to initiate transcription from late gene promoters. This chain is Viral late gene transcription factor 2 (OPG126), found in Vaccinia virus (strain Western Reserve) (VACV).